The chain runs to 144 residues: Large ribosomal subunit protein uL11 (144 aa).

This sequence belongs to the universal ribosomal protein uL11 family. As to quaternary structure, part of the ribosomal stalk of the 50S ribosomal subunit. Interacts with L10 and the large rRNA to form the base of the stalk. L10 forms an elongated spine to which L12 dimers bind in a sequential fashion forming a multimeric L10(L12)X complex. In terms of processing, one or more lysine residues are methylated.

Its function is as follows. Forms part of the ribosomal stalk which helps the ribosome interact with GTP-bound translation factors. The protein is Large ribosomal subunit protein uL11 of Polaromonas naphthalenivorans (strain CJ2).